A 449-amino-acid polypeptide reads, in one-letter code: MIHGKTLEAWQQSHPIIAELVALKPTSWFNPGIAKAAEALHDVGLTAADVQAASARLLRFAPYLATVFPETAAAGGVIESPVIPLPQLRRVLVEEGSLQNAGSLWLKADSDLPISGSIKARGGIHEVLKHAEDLALAAGLITPTDDYTKLASDQARAFFSQYTIAVGSTGNLGLSIGIMSAKLGFQVSVHMSSDARQWKKDKLRANGVTVVEHASDYSVAVEQGRQQAASDPRCYFVDDENSPQLFLGYAVAAERLARQFDQAGIQVNADHPLFVYLPCGVGGGPGGVAFGLKLVFGDAVHCIFAEPTHSPCMLLGVYTGLHDETSVQDFGIDNITAADGLAVGRPSGFVGKAMQRLIDGYYTVADEELYRLMVIAHEQDKVKLEPSALAGVPGMLRVLQAGEYLARQGFTPTQLQQATHLVWGTGGSMVPDDEFNTYLAKGRSLQANV.

Lys119 carries the post-translational modification N6-(pyridoxal phosphate)lysine.

Belongs to the serine/threonine dehydratase family. DsdA subfamily. Pyridoxal 5'-phosphate is required as a cofactor.

It catalyses the reaction D-serine = pyruvate + NH4(+). The sequence is that of Probable D-serine dehydratase from Pseudomonas putida (strain ATCC 700007 / DSM 6899 / JCM 31910 / BCRC 17059 / LMG 24140 / F1).